The chain runs to 120 residues: Large ribosomal subunit protein uL18 (120 aa).

The protein belongs to the universal ribosomal protein uL18 family. Part of the 50S ribosomal subunit; part of the 5S rRNA/L5/L18/L25 subcomplex. Contacts the 5S and 23S rRNAs.

Its function is as follows. This is one of the proteins that bind and probably mediate the attachment of the 5S RNA into the large ribosomal subunit, where it forms part of the central protuberance. The sequence is that of Large ribosomal subunit protein uL18 from Bordetella bronchiseptica (strain ATCC BAA-588 / NCTC 13252 / RB50) (Alcaligenes bronchisepticus).